We begin with the raw amino-acid sequence, 471 residues long: tRNA modification GTPase MnmE (471 aa).

Residues Arg26, Glu83, and Lys136 each coordinate (6S)-5-formyl-5,6,7,8-tetrahydrofolate. Positions 232–393 (GLRVVLAGQP…LRRRLLQLAG (162 aa)) constitute a TrmE-type G domain. Asn242 lines the K(+) pocket. GTP-binding positions include 242 to 247 (NVGKSS), 261 to 267 (TPIAGTT), 286 to 289 (DTAG), 354 to 357 (NKAD), and 374 to 376 (SAR). Residue Ser246 coordinates Mg(2+). 3 residues coordinate K(+): Thr261, Ile263, and Thr266. Thr267 lines the Mg(2+) pocket. Lys471 is a binding site for (6S)-5-formyl-5,6,7,8-tetrahydrofolate.

The protein belongs to the TRAFAC class TrmE-Era-EngA-EngB-Septin-like GTPase superfamily. TrmE GTPase family. In terms of assembly, homodimer. Heterotetramer of two MnmE and two MnmG subunits. Requires K(+) as cofactor.

The protein localises to the cytoplasm. Exhibits a very high intrinsic GTPase hydrolysis rate. Involved in the addition of a carboxymethylaminomethyl (cmnm) group at the wobble position (U34) of certain tRNAs, forming tRNA-cmnm(5)s(2)U34. This is tRNA modification GTPase MnmE from Methylibium petroleiphilum (strain ATCC BAA-1232 / LMG 22953 / PM1).